We begin with the raw amino-acid sequence, 970 residues long: Toxin subunit YenC2 (970 aa).

RHS repeat units follow at residues 168–182, 297–311, 329–343, 361–375, 408–422, 500–514, 580–594, 606–620, and 640–654; these read AGQC…GLIQ, GVVT…TQRL, LQDL…GNVL, VPEN…YQLV, NYTR…GNLM, DDSE…SQRI, NDQI…TCSS, SMEE…AVWA, and DATG…YYQP. The tract at residues 610–690 is RHS-repeat associated core domain; it reads YYPYGGTAVW…PLRLTDPDGM (81 aa). The interval 849 to 950 is deaminase domain; that stretch reads TEAFITGIRS…YNCSGIISGL (102 aa).

It belongs to the RHS family. Semipurified toxin complex consists of at least YenA1-YenA2-YenB-YenC1-YenC2-Chi1-Chi2. YenB and the N-terminus of YenC2 form a large hollow shell of beta-strands. The shell is closed at both ends, within which the C-terminus of YenC2 is probably found. The C-terminal region dissociates from the YenB-YenC2 complex at pH 4.5 but not 7.5. The Yen-TC:K9 subcomplex is about 26 nm tall and 22 nm in diameter with 5-fold symmetry and 5 copies of YenA1, YenA2, Chi1 and Chi2; the chitinase subunits may be solvent accessible on the exterior the complex. The Yen-TC:K9 subcomplex has no insecticidal activity. The native complex with additional YenB, YenC1 and YenC2 subunits is 16 nm taller and is insecticidal; the toxicity-conferring subunits are present at about 1 copy each.

It is found in the secreted. Toxin complex is secreted when grown at 25 degrees Celsius or less; at higher temperatures the proteins are present intracellularly but not secreted. Part of an orally active toxin complex (TC) with strong insecticidal effects on larvae of the Coleoptera Costelytra zealandica, Acrossidius tasmania and Adoryphorus couloni and some Lepidoptera larvae. The TC has an endochitinase activity. This is Toxin subunit YenC2 from Yersinia entomophaga.